A 287-amino-acid chain; its full sequence is Aspartate dehydrogenase domain-containing protein (287 aa).

Phosphoserine occurs at positions 24 and 172.

The protein belongs to the L-aspartate dehydrogenase family.

This is Aspartate dehydrogenase domain-containing protein from Mus musculus (Mouse).